A 287-amino-acid polypeptide reads, in one-letter code: Fructose-1,6-bisphosphatase class 1 (287 aa).

4 residues coordinate Mg(2+): Glu67, Asp86, Leu88, and Asp89. Residues 89–92, Tyr195, and Lys226 each bind substrate; that span reads DGSS. Mg(2+) is bound at residue Glu232.

It belongs to the FBPase class 1 family. Homotetramer. Mg(2+) serves as cofactor.

It localises to the cytoplasm. The catalysed reaction is beta-D-fructose 1,6-bisphosphate + H2O = beta-D-fructose 6-phosphate + phosphate. Its pathway is carbohydrate biosynthesis; gluconeogenesis. This chain is Fructose-1,6-bisphosphatase class 1, found in Campylobacter concisus (strain 13826).